Consider the following 859-residue polypeptide: Protein EFR3 homolog (859 aa).

Over residues 696-714 (RKNDGSGDQWQNDTPNFDS) the composition is skewed to polar residues. Residues 696–728 (RKNDGSGDQWQNDTPNFDSTDGRESPSGYKTVG) form a disordered region.

This sequence belongs to the EFR3 family.

This chain is Protein EFR3 homolog, found in Caenorhabditis elegans.